Here is a 76-residue protein sequence, read N- to C-terminus: Putative cation transport regulator ChaB (76 aa).

Belongs to the ChaB family. As to quaternary structure, monomer.

Functionally, might be a regulator of the sodium-potassium/proton antiporter ChaA. The protein is Putative cation transport regulator ChaB of Escherichia coli O157:H7.